A 347-amino-acid chain; its full sequence is D-alanine--D-alanine ligase (347 aa).

Positions 131–333 constitute an ATP-grasp domain; it reads KRVLESAGIA…YPELIERLVD (203 aa). 161–216 contributes to the ATP binding site; the sequence is EEKLAYPVFTKPSNMGSSVGISKSENQEELRQALKLAFRYDSRVLVEQGVNAREIE. Positions 287, 300, and 302 each coordinate Mg(2+).

The protein belongs to the D-alanine--D-alanine ligase family. It depends on Mg(2+) as a cofactor. Mn(2+) is required as a cofactor.

It is found in the cytoplasm. The enzyme catalyses 2 D-alanine + ATP = D-alanyl-D-alanine + ADP + phosphate + H(+). Its pathway is cell wall biogenesis; peptidoglycan biosynthesis. Cell wall formation. This chain is D-alanine--D-alanine ligase, found in Streptococcus pneumoniae (strain JJA).